The primary structure comprises 773 residues: MTEIENIGALEVLFSPESIEQSLKRCQLPSTLLYDEKGLRLFDEITNLKEYYLYESELDILKKFSDSIANQLLSPDLPNTVIELGCGNMRKTKLLLDAFEKKGCDVHFYALDLNEAELQKGLQELRQTTNYQHVKVSGICGCFERLLQCLDRFRSEPNSRISMLYLGASIGNFDRKSAASFLRSFASRLNIHDNLLISFDHRNKAELVQLAYDDPYRITEKFEKNILASVNAVFGENLFDENDWEYKSVYDEDLGVHRAYLQAKNEVTVIKGPMFFQFKPSHLILIEESWKNSDQECRQIIEKGDFKLVSKYESTIADYSTYVITKQFPAMLQLPLQPCPSLAEWDALRKVWLFITNKLLNKDNMYTAWIPLRHPPIFYIGHVPVFNDIYLTKIVKNKATANKKHFWEWFQRGIDPDIEDPSKCHWHSEVPESWPSPDQLREYEKESWEYHIVKLCKAMDELSTSEKRILWLCYEHVAMHVETTLYIYVQSFQNANQTVSICGSLPEPAEKLTKAPLWVNVPETEIAVGMPLTTQYTSVGSNLQSSDLSAHENTDELFYFAWDNEKPMRKKLVSSFSIANRPISNGEYLDFINKKSKTERVYPKQWAEIDGTLYIRTMYGLLPLDDYLGWPVMTSYDDLNNYASSQGCRLPTEDELNCFYDRVLERTDEPYVSTEGKATGFQQLHPLALSDNSSNQIFTGAWEWTSTVLEKHEDFEPEELYPDYTRDFFDGKHNVVLGGSFATATRISNRRSFRNFYQAGYKYAWIGARLVKN.

Residues 16–322 (PESIEQSLKR…ESTIADYSTY (307 aa)) form an L-histidine N(alpha)-methyltransferase region. Tyr51 contacts L-histidine. S-adenosyl-L-methionine is bound by residues Gly85, Lys91, Asp112, and 142–143 (CF). L-histidine contacts are provided by residues Asn172, Tyr212, and 287–289 (EES). A hercynylcysteine S-oxide synthase region spans residues 347–772 (ALRKVWLFIT…YAWIGARLVK (426 aa)). Residues His382, His476, and His480 each coordinate Fe cation.

This sequence in the N-terminal section; belongs to the methyltransferase superfamily. EgtD family. In the C-terminal section; belongs to the EgtB family. Fe(2+) is required as a cofactor.

Its subcellular location is the cytoplasm. The protein localises to the nucleus. The enzyme catalyses L-histidine + 3 S-adenosyl-L-methionine = hercynine + 3 S-adenosyl-L-homocysteine + 3 H(+). It carries out the reaction hercynine + L-cysteine + O2 = S-(hercyn-2-yl)-L-cysteine S-oxide + H2O. It participates in amino-acid biosynthesis; ergothioneine biosynthesis. Its function is as follows. Catalyzes the SAM-dependent triple methylation of the alpha-amino group of histidine to form hercynine and subsequent conjugation with cysteine and oxygen to form hercynylcysteine sulfoxide, the first two steps in the biosynthesis pathway of ergothioneine. May play a role in meiosis. This is Ergothioneine biosynthesis protein 1 from Schizosaccharomyces pombe (strain 972 / ATCC 24843) (Fission yeast).